A 407-amino-acid polypeptide reads, in one-letter code: GTPase Obg (407 aa).

The Obg domain maps to 1 to 159 (MKFVDEVSIR…RDLKMEMKVL (159 aa)). Positions 127–150 (NTRFKSSTNRAPRQTTPGKPGDQR) are disordered. The span at 129–143 (RFKSSTNRAPRQTTP) shows a compositional bias: polar residues. An OBG-type G domain is found at 160 to 333 (ADVGLLGLPN…LSHDLMRYLE (174 aa)). GTP is bound by residues 166-173 (GLPNAGKS), 191-195 (FTTLV), 213-216 (DIPG), 283-286 (NKAD), and 314-316 (SAI). Mg(2+) is bound by residues S173 and T193. Positions 378–407 (VKSVHDIGDDDDWDDFEDDEDGPEIIYVRD) are disordered. Residues 385-400 (GDDDDWDDFEDDEDGP) show a composition bias toward acidic residues.

The protein belongs to the TRAFAC class OBG-HflX-like GTPase superfamily. OBG GTPase family. As to quaternary structure, monomer. Mg(2+) serves as cofactor.

Its subcellular location is the cytoplasm. In terms of biological role, an essential GTPase which binds GTP, GDP and possibly (p)ppGpp with moderate affinity, with high nucleotide exchange rates and a fairly low GTP hydrolysis rate. Plays a role in control of the cell cycle, stress response, ribosome biogenesis and in those bacteria that undergo differentiation, in morphogenesis control. The chain is GTPase Obg from Pseudomonas entomophila (strain L48).